The following is a 505-amino-acid chain: 2,3-bisphosphoglycerate-independent phosphoglycerate mutase (505 aa).

Asp11 and Ser61 together coordinate Mn(2+). Ser61 serves as the catalytic Phosphoserine intermediate. Residues His122, 152 to 153, Arg183, Arg189, 259 to 262, and Lys332 contribute to the substrate site; these read RD and RTDR. Mn(2+)-binding residues include Asp399, His403, Asp440, His441, and His458.

It belongs to the BPG-independent phosphoglycerate mutase family. In terms of assembly, monomer. The cofactor is Mn(2+).

It carries out the reaction (2R)-2-phosphoglycerate = (2R)-3-phosphoglycerate. It functions in the pathway carbohydrate degradation; glycolysis; pyruvate from D-glyceraldehyde 3-phosphate: step 3/5. In terms of biological role, catalyzes the interconversion of 2-phosphoglycerate and 3-phosphoglycerate. This Flavobacterium johnsoniae (strain ATCC 17061 / DSM 2064 / JCM 8514 / BCRC 14874 / CCUG 350202 / NBRC 14942 / NCIMB 11054 / UW101) (Cytophaga johnsonae) protein is 2,3-bisphosphoglycerate-independent phosphoglycerate mutase.